A 295-amino-acid polypeptide reads, in one-letter code: Pyridoxal 5'-phosphate synthase subunit PdxS (295 aa).

Asp23 contacts D-ribose 5-phosphate. Lys80 functions as the Schiff-base intermediate with D-ribose 5-phosphate in the catalytic mechanism. Gly152 is a D-ribose 5-phosphate binding site. Residue Arg164 participates in D-glyceraldehyde 3-phosphate binding. D-ribose 5-phosphate contacts are provided by residues Gly213 and 234-235; that span reads GS.

Belongs to the PdxS/SNZ family. In terms of assembly, in the presence of PdxT, forms a dodecamer of heterodimers.

The enzyme catalyses aldehydo-D-ribose 5-phosphate + D-glyceraldehyde 3-phosphate + L-glutamine = pyridoxal 5'-phosphate + L-glutamate + phosphate + 3 H2O + H(+). It participates in cofactor biosynthesis; pyridoxal 5'-phosphate biosynthesis. Catalyzes the formation of pyridoxal 5'-phosphate from ribose 5-phosphate (RBP), glyceraldehyde 3-phosphate (G3P) and ammonia. The ammonia is provided by the PdxT subunit. Can also use ribulose 5-phosphate and dihydroxyacetone phosphate as substrates, resulting from enzyme-catalyzed isomerization of RBP and G3P, respectively. The sequence is that of Pyridoxal 5'-phosphate synthase subunit PdxS from Methanopyrus kandleri (strain AV19 / DSM 6324 / JCM 9639 / NBRC 100938).